The following is a 123-amino-acid chain: Ribosome-binding factor A (123 aa).

Belongs to the RbfA family. In terms of assembly, monomer. Binds 30S ribosomal subunits, but not 50S ribosomal subunits or 70S ribosomes.

Its subcellular location is the cytoplasm. Its function is as follows. One of several proteins that assist in the late maturation steps of the functional core of the 30S ribosomal subunit. Associates with free 30S ribosomal subunits (but not with 30S subunits that are part of 70S ribosomes or polysomes). Required for efficient processing of 16S rRNA. May interact with the 5'-terminal helix region of 16S rRNA. The protein is Ribosome-binding factor A of Koribacter versatilis (strain Ellin345).